Consider the following 434-residue polypeptide: Methylenetetrahydrofolate--tRNA-(uracil-5-)-methyltransferase TrmFO (434 aa).

Residue 9-14 (GAGLAG) coordinates FAD.

This sequence belongs to the MnmG family. TrmFO subfamily. FAD serves as cofactor.

The protein localises to the cytoplasm. It catalyses the reaction uridine(54) in tRNA + (6R)-5,10-methylene-5,6,7,8-tetrahydrofolate + NADH + H(+) = 5-methyluridine(54) in tRNA + (6S)-5,6,7,8-tetrahydrofolate + NAD(+). It carries out the reaction uridine(54) in tRNA + (6R)-5,10-methylene-5,6,7,8-tetrahydrofolate + NADPH + H(+) = 5-methyluridine(54) in tRNA + (6S)-5,6,7,8-tetrahydrofolate + NADP(+). Its function is as follows. Catalyzes the folate-dependent formation of 5-methyl-uridine at position 54 (M-5-U54) in all tRNAs. In Listeria innocua serovar 6a (strain ATCC BAA-680 / CLIP 11262), this protein is Methylenetetrahydrofolate--tRNA-(uracil-5-)-methyltransferase TrmFO.